Consider the following 132-residue polypeptide: Histone H2A.2 (132 aa).

Serine 2 is modified (N-acetylserine). Residues lysine 5 and lysine 8 each carry the N6-acetyllysine modification. Lysine 14 and lysine 22 each carry N6-succinyllysine. Glutamine 106 is modified (N5-methylglutamine). Lysine 120 is modified (N6-malonyllysine). Lysine 127 is covalently cross-linked (Glycyl lysine isopeptide (Lys-Gly) (interchain with G-Cter in SUMO)). A Phosphoserine modification is found at serine 129. The short motif at 129 to 130 (SQ) is the [ST]-Q motif element.

This sequence belongs to the histone H2A family. In terms of assembly, the nucleosome is a histone octamer containing two molecules each of H2A, H2B, H3 and H4 assembled in one H3-H4 heterotetramer and two H2A-H2B heterodimers. The octamer wraps approximately 147 bp of DNA. Interacts with NAP1. Post-translationally, phosphorylated to form H2AS128ph (gamma-H2A) in response to DNA double-strand breaks (DSBs) generated by exogenous genotoxic agents and by stalled replication forks. Phosphorylation is dependent on the DNA damage checkpoint kinases MEC1/ATR and TEL1/ATM, spreads on either side of a detected DSB site and may mark the surrounding chromatin for recruitment of proteins required for DNA damage signaling and repair. Gamma-H2A interacts with ARP4, a shared component of the NuA4 histone acetyltransferase complex and the INO80 and SWR1 chromatin remodeling complexes, and serves to recruit first NuA4, mediating histone H4 acetylation, and subsequently the INO80/SWR1 complexes, facilitating DNA resection, to DSB sites. Gamma-H2A is required for sequestering cohesin around the break site, which is important for efficient post-replicative double-strand break repair by homologous recombination, holding the damaged chromatid close to its undamaged sister template. Gamma-H2A is removed from the DNA prior to the strand invasion-primer extension step of the repair process and subsequently dephosphorylated by PPH3, a component of the histone H2A phosphatase complex (HTP-C). Dephosphorylation is necessary for efficient recovery from the DNA damage checkpoint. N-acetylated by NAT4. In terms of processing, acetylated by ESA1, a component of the NuA4 histone acetyltransferase (HAT) complex, to form H2AK4ac and H2AK7ac. Post-translationally, glutamine methylation at Gln-106 (H2AQ105me) by NOP1 is specifically dedicated to polymerase I. It is present at 35S ribosomal DNA locus and impairs binding of the FACT complex. Sumoylated to from H2AK126su. May lead to transcriptional repression.

It is found in the nucleus. It localises to the chromosome. Core component of nucleosome which plays a central role in DNA double strand break (DSB) repair. Nucleosomes wrap and compact DNA into chromatin, limiting DNA accessibility to the cellular machineries which require DNA as a template. Histones thereby play a central role in transcription regulation, DNA repair, DNA replication and chromosomal stability. DNA accessibility is regulated via a complex set of post-translational modifications of histones, also called histone code, and nucleosome remodeling. In Saccharomyces cerevisiae (strain ATCC 204508 / S288c) (Baker's yeast), this protein is Histone H2A.2 (HTA2).